Here is a 348-residue protein sequence, read N- to C-terminus: Sulfate/thiosulfate import ATP-binding protein CysA (348 aa).

One can recognise an ABC transporter domain in the interval 3–237 (IRIQELRKQF…PSSPFVYSFV (235 aa)). 35–42 (GPSGSGKT) is a binding site for ATP.

This sequence belongs to the ABC transporter superfamily. Sulfate/tungstate importer (TC 3.A.1.6) family. The complex is composed of two ATP-binding proteins (CysA), two transmembrane proteins (CysT and CysW) and a solute-binding protein (CysP).

The protein resides in the cell inner membrane. The enzyme catalyses sulfate(out) + ATP + H2O = sulfate(in) + ADP + phosphate + H(+). The catalysed reaction is thiosulfate(out) + ATP + H2O = thiosulfate(in) + ADP + phosphate + H(+). In terms of biological role, part of the ABC transporter complex CysAWTP involved in sulfate/thiosulfate import. Responsible for energy coupling to the transport system. This Xylella fastidiosa (strain Temecula1 / ATCC 700964) protein is Sulfate/thiosulfate import ATP-binding protein CysA.